Reading from the N-terminus, the 308-residue chain is UDP-N-acetylenolpyruvoylglucosamine reductase (308 aa).

Residues 32–196 (VGGPAARLYK…ISAKLQLSPG (165 aa)) form the FAD-binding PCMH-type domain. Arg176 is an active-site residue. Ser225 (proton donor) is an active-site residue. Residue Glu296 is part of the active site.

This sequence belongs to the MurB family. Requires FAD as cofactor.

Its subcellular location is the cytoplasm. The catalysed reaction is UDP-N-acetyl-alpha-D-muramate + NADP(+) = UDP-N-acetyl-3-O-(1-carboxyvinyl)-alpha-D-glucosamine + NADPH + H(+). The protein operates within cell wall biogenesis; peptidoglycan biosynthesis. In terms of biological role, cell wall formation. This Legionella pneumophila subsp. pneumophila (strain Philadelphia 1 / ATCC 33152 / DSM 7513) protein is UDP-N-acetylenolpyruvoylglucosamine reductase.